Reading from the N-terminus, the 6486-residue chain is Tyrocidine synthase 3 (6486 aa).

The domain 1 (asparagine-activating) stretch occupies residues 466–1038 (IFELIAEQAS…VAELARFLSR (573 aa)). Carrier domains lie at 965 to 1040 (APQN…SRSE), 2002 to 2077 (APRN…AAAR), 3040 to 3115 (APTN…ATSG), 4075 to 4150 (AAQN…AESA), 5119 to 5194 (APRS…EETA), and 6162 to 6237 (APRN…THKR). O-(pantetheine 4'-phosphoryl)serine occurs at positions 1000, 2037, 3075, 4110, 5154, and 6197. The interval 1521-2070 (YEEYALTYRE…FESPTIAGLA (550 aa)) is domain 2 (glutamine-activating). A domain 3 (tyrosine-activating) region spans residues 2536-3113 (NKTLQALFEE…IKALAQYVAT (578 aa)). Residues 3590–4149 (EHAAVVMDGQ…HELAAHIAES (560 aa)) are domain 4 (valine-activating). Positions 4606 to 5203 (YPTDKTFQKL…AKGNVFSIEP (598 aa)) are domain 5 (ornithine-activating). Residues 5658-6245 (LHQLFEEQVD…KRFESRYGTA (588 aa)) form a domain 6 (leucine-activating) region.

Belongs to the ATP-dependent AMP-binding enzyme family. In terms of assembly, large multienzyme complex of TycA, TycB and TycC. Pantetheine 4'-phosphate serves as cofactor.

It participates in antibiotic biosynthesis; tyrocidine biosynthesis. Functionally, incorporates six amino acids (for tyrocidine A, Asn, Gln, Tyr, Val, Orn, and Leu) in their L-configuration into the peptide product. The polypeptide is Tyrocidine synthase 3 (tycC) (Brevibacillus parabrevis).